We begin with the raw amino-acid sequence, 969 residues long: Dual serine/threonine and tyrosine protein kinase (969 aa).

Positions 7-37 form a coiled coil; that stretch reads QEFRRYLRNRNQLQHVLEETQQALELINLEN. Residues 632–894 enclose the Protein kinase domain; the sequence is PHCAEEIGRG…PLLGAIVPVL (263 aa). Residues 638–646 and lysine 662 contribute to the ATP site; that span reads IGRGQYGIV. Residue aspartate 760 is the Proton acceptor of the active site. The tract at residues 904 to 945 is disordered; that stretch reads SKSLQEVSSDKLQESSTDSRNPALALAEPYNQRGTVVSPPPT.

This sequence belongs to the protein kinase superfamily. Ser/Thr protein kinase family.

Its subcellular location is the cytoplasm. The enzyme catalyses L-seryl-[protein] + ATP = O-phospho-L-seryl-[protein] + ADP + H(+). It catalyses the reaction L-threonyl-[protein] + ATP = O-phospho-L-threonyl-[protein] + ADP + H(+). The catalysed reaction is L-tyrosyl-[protein] + ATP = O-phospho-L-tyrosyl-[protein] + ADP + H(+). This chain is Dual serine/threonine and tyrosine protein kinase, found in Apis mellifera (Honeybee).